The chain runs to 179 residues: Large ribosomal subunit protein uL5 (179 aa).

Belongs to the universal ribosomal protein uL5 family. As to quaternary structure, part of the 50S ribosomal subunit; part of the 5S rRNA/L5/L18/L25 subcomplex. Contacts the 5S rRNA and the P site tRNA. Forms a bridge to the 30S subunit in the 70S ribosome.

Functionally, this is one of the proteins that bind and probably mediate the attachment of the 5S RNA into the large ribosomal subunit, where it forms part of the central protuberance. In the 70S ribosome it contacts protein S13 of the 30S subunit (bridge B1b), connecting the 2 subunits; this bridge is implicated in subunit movement. Contacts the P site tRNA; the 5S rRNA and some of its associated proteins might help stabilize positioning of ribosome-bound tRNAs. The polypeptide is Large ribosomal subunit protein uL5 (Staphylococcus epidermidis (strain ATCC 35984 / DSM 28319 / BCRC 17069 / CCUG 31568 / BM 3577 / RP62A)).